We begin with the raw amino-acid sequence, 325 residues long: Isoaspartyl peptidase/L-asparaginase (325 aa).

The active-site Nucleophile is Thr193. Residues 221–224 and 243–246 each bind substrate; these read RIGD and TGKG.

The protein belongs to the Ntn-hydrolase family. In terms of assembly, heterotetramer of two alpha and two beta chains arranged as a dimer of alpha/beta heterodimers. In terms of processing, cleaved into an alpha and beta chain by autocatalysis; this activates the enzyme. The N-terminal residue of the beta subunit is responsible for the nucleophile hydrolase activity. In terms of tissue distribution, expressed in ripening seeds and developing nodules.

The enzyme catalyses Cleavage of a beta-linked Asp residue from the N-terminus of a polypeptide.. Degrades proteins damaged by L-isoaspartyl residue formation (also known as beta-Asp residues). Also has L-asparaginase activity, which is used to liberate stored nitrogen during seed development. The chain is Isoaspartyl peptidase/L-asparaginase from Lupinus luteus (European yellow lupine).